A 439-amino-acid polypeptide reads, in one-letter code: Ribosomal protein uS12 methylthiotransferase RimO (439 aa).

The 113-residue stretch at 7 to 119 folds into the MTTase N-terminal domain; that stretch reads KQLCLISLGC…IDIMIAKKQN (113 aa). Residues C16, C50, C82, C151, C155, and C158 each coordinate [4Fe-4S] cluster. The Radical SAM core domain occupies 137–368; the sequence is TGSSVHAYVK…ALKHQNHSFK (232 aa).

The protein belongs to the methylthiotransferase family. RimO subfamily. Requires [4Fe-4S] cluster as cofactor.

Its subcellular location is the cytoplasm. The catalysed reaction is L-aspartate(89)-[ribosomal protein uS12]-hydrogen + (sulfur carrier)-SH + AH2 + 2 S-adenosyl-L-methionine = 3-methylsulfanyl-L-aspartate(89)-[ribosomal protein uS12]-hydrogen + (sulfur carrier)-H + 5'-deoxyadenosine + L-methionine + A + S-adenosyl-L-homocysteine + 2 H(+). Functionally, catalyzes the methylthiolation of an aspartic acid residue of ribosomal protein uS12. The protein is Ribosomal protein uS12 methylthiotransferase RimO of Helicobacter pylori (strain G27).